The sequence spans 271 residues: 2,3,4,5-tetrahydropyridine-2,6-dicarboxylate N-succinyltransferase (271 aa).

Substrate-binding residues include arginine 102 and aspartate 139.

Belongs to the transferase hexapeptide repeat family. Homotrimer.

The protein localises to the cytoplasm. It catalyses the reaction (S)-2,3,4,5-tetrahydrodipicolinate + succinyl-CoA + H2O = (S)-2-succinylamino-6-oxoheptanedioate + CoA. Its pathway is amino-acid biosynthesis; L-lysine biosynthesis via DAP pathway; LL-2,6-diaminopimelate from (S)-tetrahydrodipicolinate (succinylase route): step 1/3. The chain is 2,3,4,5-tetrahydropyridine-2,6-dicarboxylate N-succinyltransferase from Coxiella burnetii (strain RSA 331 / Henzerling II).